The sequence spans 166 residues: Putative 4-hydroxy-4-methyl-2-oxoglutarate aldolase (166 aa).

Substrate contacts are provided by residues 74–77 (GDQI) and R96. An a divalent metal cation-binding site is contributed by D97.

It belongs to the class II aldolase/RraA-like family. In terms of assembly, homotrimer. It depends on a divalent metal cation as a cofactor.

The enzyme catalyses 4-hydroxy-4-methyl-2-oxoglutarate = 2 pyruvate. It catalyses the reaction oxaloacetate + H(+) = pyruvate + CO2. Functionally, catalyzes the aldol cleavage of 4-hydroxy-4-methyl-2-oxoglutarate (HMG) into 2 molecules of pyruvate. Also contains a secondary oxaloacetate (OAA) decarboxylase activity due to the common pyruvate enolate transition state formed following C-C bond cleavage in the retro-aldol and decarboxylation reactions. The protein is Putative 4-hydroxy-4-methyl-2-oxoglutarate aldolase of Xanthomonas campestris pv. campestris (strain 8004).